The sequence spans 477 residues: Transcription factor Sox-9-A (477 aa).

Disordered stretches follow at residues 1–66 (MNLL…ETED) and 157–274 (EAER…FRDV). Over residues 27–42 (SDDSAGSPCPSGSGSD) the composition is skewed to low complexity. Composition is skewed to basic and acidic residues over residues 56 to 66 (GDQELKKETED) and 157 to 174 (EAER…DYKY). Lysine 61 is covalently cross-linked (Glycyl lysine isopeptide (Lys-Gly) (interchain with G-Cter in SUMO)). The dimerization (DIM) stretch occupies residues 63–103 (ETEDEKFPVCIREAVSQVLKGYDWTLVPMPVRVNGSSKNKP). The interval 63–103 (ETEDEKFPVCIREAVSQVLKGYDWTLVPMPVRVNGSSKNKP) is PQA. Positions 105-173 (VKRPMNAFMV…QHKKDHPDYK (69 aa)) form a DNA-binding region, HMG box. Residues 211–222 (SPHSSSSMSEVH) are compositionally biased toward low complexity. Residues 224–308 (PGEHSGQSQG…LPPNGHPGVG (85 aa)) form a transactivation domain (TAM) region. 2 short sequence motifs (9aaTAD) span residues 276 to 285 (IGELSSEVIS) and 291 to 299 (DVNEFDQYL). Positions 301–384 (PNGHPGVGST…SDQQQQHSPQ (84 aa)) are disordered. 2 stretches are compositionally biased toward polar residues: residues 308–328 (GSTQ…SATT) and 346–361 (HSLS…SQQR). A transactivation domain (TAC) region spans residues 361-477 (RTHIKTEQLS…QPVYTQLTRP (117 aa)). Lysine 365 is covalently cross-linked (Glycyl lysine isopeptide (Lys-Gly) (interchain with G-Cter in SUMO)). The span at 370 to 384 (SPSHYSDQQQQHSPQ) shows a compositional bias: low complexity. The short motif at 428–436 (SGLYSTFSY) is the 9aaTAD 3 element. Residues 446–477 (TPIADTTGVPSIPQTHSPQHWEQPVYTQLTRP) are disordered. Residues 453–477 (GVPSIPQTHSPQHWEQPVYTQLTRP) show a composition bias toward polar residues.

In terms of assembly, interacts with the sumoylation factors ube2i/ubc9 and sumo1. Post-translationally, sumoylated. Lys-365 is the major site of sumoylation, although sumoylation at Lys-61 also occurs. Sumoylation plays a key role in regulating formation of the neural crest and otic placode. From mid-gastrula (stage 10.5-11), expressed in a ring around the blastopore, with expression decreasing toward the dorsal side. At stage 12, expression around the blastopore decreases and begins to increase lateral to the neural plate in the presumptive neural crest, where expression dramatically increases around stage 14. Also expressed in the otic placode as early as stage 13/14. By the tailbud stage expression is restricted to the otic cup and then throughout the otic vesicle, with more intense staining at the dorsal-most region, the prospective region of the semicircular canals and endolymphatic duct. At the early tailbud stage (stage 23), expressed in migrating cranial neural crest cells and in the trunk neural crest. Also expressed in the genital ridges, developing eye, nasal placode and prospective pineal gland. Around stage 25, expression is down-regulated in the trunk neural crest but persists in the migrating cranial crest cells as they populate the pharyngeal arches, otic placode, developing eye, genital ridges and notochord. By stage 31, expression remains strong in the pharyngeal arches. Also expressed in the pancreas; first expressed at stage 25 in the pancreatic anlagen, dorsally in diverticulum. As development proceeds, expression continues in pancreatic tissue, being restricted to ventral and dorsal pancreatic buds.

It localises to the nucleus. Its subcellular location is the cytoplasm. In terms of biological role, transcription factor that plays a key role in chondrocytes differentiation and skeletal development. Specifically binds the 5'-ACAAAG-3' DNA motif present in enhancers and super-enhancers and promotes expression of genes important for chondrogenesis, including COL2A1. Plays a central role in successive steps of chondrocyte differentiation. Absolutely required for precartilaginous condensation, the first step in chondrogenesis during which skeletal progenitors differentiate into prechondrocytes. Together with SOX5 and SOX6, required for overt chondrogenesis when condensed prechondrocytes differentiate into early stage chondrocytes, the second step in chondrogenesis. Later, required to direct hypertrophic maturation and block osteoblast differentiation of growth plate chondrocytes: maintains chondrocyte columnar proliferation, delays prehypertrophy and then prevents osteoblastic differentiation of chondrocytes. Also required for chondrocyte hypertrophy, both indirectly, by keeping the lineage fate of chondrocytes, and directly, by remaining present in upper hypertrophic cells. Low lipid levels are the main nutritional determinant for chondrogenic commitment of skeletal progenitor cells: when lipids levels are low, FOXO transcription factors promote expression of SOX9, which induces chondrogenic commitment and suppresses fatty acid oxidation. In addition to cartilage development, also acts as a regulator of proliferation and differentiation in epithelial stem/progenitor cells. Involved in development of the cranial neural crest, which is fated to form skeletal elements. Also required for otic placode specification during inner ear development. The polypeptide is Transcription factor Sox-9-A (sox9-a) (Xenopus laevis (African clawed frog)).